The chain runs to 227 residues: Flagellar L-ring protein (227 aa).

The signal sequence occupies residues 1–15 (MRTWAVLPILLMLVG). Cysteine 16 carries N-palmitoyl cysteine lipidation. Residue cysteine 16 is the site of S-diacylglycerol cysteine attachment.

The protein belongs to the FlgH family. In terms of assembly, the basal body constitutes a major portion of the flagellar organelle and consists of four rings (L,P,S, and M) mounted on a central rod.

It is found in the cell outer membrane. It localises to the bacterial flagellum basal body. Its function is as follows. Assembles around the rod to form the L-ring and probably protects the motor/basal body from shearing forces during rotation. This chain is Flagellar L-ring protein, found in Syntrophotalea carbinolica (strain DSM 2380 / NBRC 103641 / GraBd1) (Pelobacter carbinolicus).